The sequence spans 191 residues: Uridylate kinase (191 aa).

12-17 (GAGKGT) provides a ligand contact to ATP. Positions 33 to 63 (SAGDCLREEQNRPGSKYGNLIKEYIKDGKIV) are NMP. A ribonucleoside 5'-phosphate is bound by residues arginine 39, 61–63 (KIV), 91–94 (GFPR), and glutamine 98. The interval 128–138 (HRGKTSGRSDD) is LID. Position 129 (arginine 129) interacts with ATP. A ribonucleoside 5'-phosphate contacts are provided by arginine 135 and arginine 146. An ATP-binding site is contributed by glutamine 174.

Belongs to the adenylate kinase family. UMP-CMP kinase subfamily. As to quaternary structure, monomer. Mg(2+) serves as cofactor.

It localises to the cytoplasm. The protein resides in the nucleus. The catalysed reaction is UMP + ATP = UDP + ADP. Functionally, catalyzes the phosphorylation of pyrimidine nucleoside monophosphates at the expense of ATP. Plays an important role in de novo pyrimidine nucleotide biosynthesis. Has preference for UMP and dUMP as phosphate acceptors, but can also use CMP, dCMP and AMP. This Schizosaccharomyces pombe (strain 972 / ATCC 24843) (Fission yeast) protein is Uridylate kinase.